Here is a 154-residue protein sequence, read N- to C-terminus: Low molecular weight protein-tyrosine-phosphatase PtpA (154 aa).

The active-site Nucleophile is the cysteine 8. Arginine 14 is an active-site residue. The Proton donor role is filled by aspartate 120.

It belongs to the low molecular weight phosphotyrosine protein phosphatase family. In terms of assembly, interacts with host CORO1A. Phosphorylations at Tyr-122 and Tyr-123 are essential for phosphatase activity.

The protein localises to the secreted. The enzyme catalyses O-phospho-L-tyrosyl-[protein] + H2O = L-tyrosyl-[protein] + phosphate. Functionally, secreted tyrosine phosphatase that plays a critical role during infection as a bacterial effector protein that counteracts host defenses. Required for intramacrophage survival. The sequence is that of Low molecular weight protein-tyrosine-phosphatase PtpA (ptpA) from Staphylococcus aureus (strain MSSA476).